A 664-amino-acid polypeptide reads, in one-letter code: MIEQARIEELRQKLNQYSYEYYVQDQPTVPDSTYDQLLRELTELETAHPELITPDSPTQRVGAAALDAFEKVTHDLPMLSLGNVFDETEIREWVARIERSLGRSTTYVAELKFDGLAISLKYEDGQLVRGATRGDGTVGENITQNLRTIKALPLRLRRNETVEVRGEAYMPKQSFERLNADRAAREEALFANPRNAAAGSLRQLDSSITASRNLSLFVYGVGVNTLSARSHSEAMLQLAELGLPTNKEMQTCETVEEILAYIAHWTMERSNLPYEIDGIVLKVDRYDDQEELGFTAKSPRFATAYKFAAEEVMTTVEEVDFSVGRTGKVTPRARFAPVVVAGSTVSYATLHNADFITEKDIRLHDQVIIKKAGDVIPAVVSVVVSERTGNEQPIEFPAHCPACESELVRLEGEADIRCVSPECPAQLVEGIIHFVSRQAMNIDGLGEKVVRQLYEHEAIRTLADLYRLDRDELLTYERMGETSVDNLLTAIEASKQNSLERLMFGLGIRLVGQKAAYLLAERFDSLDGIAQAEYEDILAIDGIGSKIADSVTKYFEHPEAQALIKDLAELGLNQQFLGQRVDQSNAPLAGKTIVLTGTLESLKRSEAGKRLELLGADVTGSVSKKTDILVAGEKAGSKLTKAESLGIEIWNETQLLEELAKYEG.

NAD(+) contacts are provided by residues 31-35 (DSTYD), 80-81 (SL), and Glu110. Catalysis depends on Lys112, which acts as the N6-AMP-lysine intermediate. NAD(+) contacts are provided by Arg133, Glu167, Lys282, and Lys306. Residues Cys400, Cys403, Cys418, and Cys423 each contribute to the Zn(2+) site. A BRCT domain is found at 583-664 (QSNAPLAGKT…LLEELAKYEG (82 aa)).

Belongs to the NAD-dependent DNA ligase family. LigA subfamily. Mg(2+) serves as cofactor. The cofactor is Mn(2+).

It carries out the reaction NAD(+) + (deoxyribonucleotide)n-3'-hydroxyl + 5'-phospho-(deoxyribonucleotide)m = (deoxyribonucleotide)n+m + AMP + beta-nicotinamide D-nucleotide.. DNA ligase that catalyzes the formation of phosphodiester linkages between 5'-phosphoryl and 3'-hydroxyl groups in double-stranded DNA using NAD as a coenzyme and as the energy source for the reaction. It is essential for DNA replication and repair of damaged DNA. The sequence is that of DNA ligase from Exiguobacterium sibiricum (strain DSM 17290 / CCUG 55495 / CIP 109462 / JCM 13490 / 255-15).